A 38-amino-acid chain; its full sequence is Photosystem II reaction center protein L (38 aa).

Residues 17–37 (SLYWGLLLIFVLAVLFSSYIF) traverse the membrane as a helical segment.

Belongs to the PsbL family. PSII is composed of 1 copy each of membrane proteins PsbA, PsbB, PsbC, PsbD, PsbE, PsbF, PsbH, PsbI, PsbJ, PsbK, PsbL, PsbM, PsbT, PsbX, PsbY, PsbZ, Psb30/Ycf12, at least 3 peripheral proteins of the oxygen-evolving complex and a large number of cofactors. It forms dimeric complexes.

It localises to the plastid. Its subcellular location is the chloroplast thylakoid membrane. Functionally, one of the components of the core complex of photosystem II (PSII). PSII is a light-driven water:plastoquinone oxidoreductase that uses light energy to abstract electrons from H(2)O, generating O(2) and a proton gradient subsequently used for ATP formation. It consists of a core antenna complex that captures photons, and an electron transfer chain that converts photonic excitation into a charge separation. This subunit is found at the monomer-monomer interface and is required for correct PSII assembly and/or dimerization. The protein is Photosystem II reaction center protein L of Ostreococcus tauri.